We begin with the raw amino-acid sequence, 417 residues long: Diphosphomevalonate decarboxylase 1 (417 aa).

Position 22–25 (22–25) interacts with (R)-5-diphosphomevalonate; the sequence is YWGK. The short motif at 39-47 is the Peroxisomal targeting signal PTS2 element; that stretch reads RVSLDPDHL. Residues arginine 77, 160–165, and threonine 216 each bind (R)-5-diphosphomevalonate; that span reads SGSACR.

It belongs to the diphosphomevalonate decarboxylase family. In terms of assembly, homodimer.

The protein resides in the peroxisome. It catalyses the reaction (R)-5-diphosphomevalonate + ATP = isopentenyl diphosphate + ADP + phosphate + CO2. It functions in the pathway isoprenoid biosynthesis; isopentenyl diphosphate biosynthesis via mevalonate pathway; isopentenyl diphosphate from (R)-mevalonate: step 3/3. In terms of biological role, performs the first committed step in the biosynthesis of isoprene-containing compounds such as sterols and terpenoids. Component of the triterpene saponins (e.g. ginsenosides or panaxosides) and phytosterols biosynthetic pathways. Catalyzes the conversion of mevalonate diphosphate to isopentenyl diphosphate (IPP). The chain is Diphosphomevalonate decarboxylase 1 from Panax ginseng (Korean ginseng).